Reading from the N-terminus, the 67-residue chain is MMSKLGVLLTICLLLFPLTAVPLDGDQPADQPAERKQNEQHPLFDQKRGCCRWPCPSRCGMARCCSS.

Positions 1-20 are cleaved as a signal peptide; the sequence is MMSKLGVLLTICLLLFPLTA. Residues 21–48 constitute a propeptide that is removed on maturation; the sequence is VPLDGDQPADQPAERKQNEQHPLFDQKR. Cystine bridges form between cysteine 50/cysteine 59, cysteine 51/cysteine 64, and cysteine 55/cysteine 65.

This sequence belongs to the conotoxin M superfamily. In terms of tissue distribution, expressed by the venom duct.

The protein resides in the secreted. Mu-conotoxins block voltage-gated sodium channels (Nav). This toxin specifically inhibits mammalian Nav1.8/SCN10A sodium currents (IC(50)=2.11 uM) without inducing a shift in the current-voltage relationship of this channel. In vivo, shows potent analgesic activity in a mice hotplate analgesic assay. In addition, this toxin has better analgesic effects than Ziconotide, an analgesic drug. The polypeptide is Mu-conotoxin TsIIIA (Conus tessulatus (Tessellate cone)).